Reading from the N-terminus, the 258-residue chain is MVLIRVLANLLVLQLSYAQMSSELVVGGGECNRNRHRSLALLYNSSGTLCGGTLIHEEWVLSAAHCDMENMKIYLGLHNLSLPNKDQQKREPRETHFCLPSRNYTLWDKDIMLIKLNRPVNNSPHIAPISLPSNPPRLRSVCHIMGWGAITSPNETYPDVPHCANINILRYSVCRAAFGRLPAQSRTLCAGILRGGIDTCLGDSGGPLICNGQIQGIVSWGAEVCAKPHAPGLYTKVSDYTDWIQSIIAGNTTATCPP.

Residues 1-18 form the signal peptide; the sequence is MVLIRVLANLLVLQLSYA. The Peptidase S1 domain maps to 25-249; the sequence is VVGGGECNRN…YTDWIQSIIA (225 aa). N44 carries N-linked (GlcNAc...) asparagine glycosylation. An intrachain disulfide couples C50 to C66. The active-site Charge relay system is the H65. Residues N79 and N103 are each glycosylated (N-linked (GlcNAc...) asparagine). Catalysis depends on D110, which acts as the Charge relay system. 3 cysteine pairs are disulfide-bonded: C142-C210, C174-C189, and C200-C225. N-linked (GlcNAc...) asparagine glycosylation is present at N154. S204 acts as the Charge relay system in catalysis. N-linked (GlcNAc...) asparagine glycosylation is present at N251.

This sequence belongs to the peptidase S1 family. Snake venom subfamily. As to quaternary structure, monomer. In terms of tissue distribution, expressed by the venom gland.

The protein localises to the secreted. In terms of biological role, snake venom serine protease that may act in the hemostasis system of the prey. The sequence is that of Serine protease sp-Eoc49 from Echis ocellatus (Ocellated saw-scaled viper).